The sequence spans 407 residues: Histone-lysine N-methyltransferase SUV39H2 (407 aa).

The region spanning 43–101 (YEVEYLCDYKVEEGKEYYLVKWKGWPESSNTWEPQKNLKCPKLLENFLSDKDEYLSRMK) is the Chromo domain. The region spanning 185-243 (TGCECSDCPAEKCCPKEAGFILAYNKQKKLKIQPGLPIYECNSFCRCGPDCPNRIVQKG) is the Pre-SET domain. The Zn(2+) site is built by Cys187, Cys189, Cys192, Cys197, Cys198, Cys225, Cys229, Cys231, and Cys235. One can recognise an SET domain in the interval 246-369 (YSLCIFRTNN…AGEELTFDYQ (124 aa)). S-adenosyl-L-methionine is bound by residues 257–259 (RGW), Tyr300, and 326–327 (NH). Zn(2+)-binding residues include Cys329, Cys395, Cys397, and Cys402. The region spanning 391–407 (IRTVCKCGAVCCRGYLN) is the Post-SET domain.

It belongs to the class V-like SAM-binding methyltransferase superfamily. Histone-lysine methyltransferase family. Suvar3-9 subfamily.

The protein localises to the nucleus. Its subcellular location is the chromosome. The protein resides in the centromere. The enzyme catalyses L-lysyl(9)-[histone H3] + 3 S-adenosyl-L-methionine = N(6),N(6),N(6)-trimethyl-L-lysyl(9)-[histone H3] + 3 S-adenosyl-L-homocysteine + 3 H(+). In terms of biological role, histone methyltransferase that specifically trimethylates 'Lys-9' of histone H3 using monomethylated H3 'Lys-9' as substrate. H3 'Lys-9' trimethylation represents a specific tag for epigenetic transcriptional repression by recruiting HP1 (CBX1, CBX3 and/or CBX5) proteins to methylated histones. Mainly functions in heterochromatin regions, thereby playing a central role in the establishment of constitutive heterochromatin at pericentric and telomere regions. H3 'Lys-9' trimethylation is also required to direct DNA methylation at pericentric repeats. SUV39H1 is targeted to histone H3 via its interaction with RB1 and is involved in many processes. This Gallus gallus (Chicken) protein is Histone-lysine N-methyltransferase SUV39H2 (SUV39H2).